Here is a 211-residue protein sequence, read N- to C-terminus: Large ribosomal subunit protein uL3 (211 aa).

The residue at position 150 (glutamine 150) is an N5-methylglutamine.

This sequence belongs to the universal ribosomal protein uL3 family. As to quaternary structure, part of the 50S ribosomal subunit. Forms a cluster with proteins L14 and L19. Methylated by PrmB.

Its function is as follows. One of the primary rRNA binding proteins, it binds directly near the 3'-end of the 23S rRNA, where it nucleates assembly of the 50S subunit. The polypeptide is Large ribosomal subunit protein uL3 (Pseudomonas putida (strain GB-1)).